We begin with the raw amino-acid sequence, 153 residues long: Endoribonuclease YbeY (153 aa).

Zn(2+)-binding residues include histidine 114, histidine 118, and histidine 124.

The protein belongs to the endoribonuclease YbeY family. It depends on Zn(2+) as a cofactor.

It is found in the cytoplasm. In terms of biological role, single strand-specific metallo-endoribonuclease involved in late-stage 70S ribosome quality control and in maturation of the 3' terminus of the 16S rRNA. This chain is Endoribonuclease YbeY, found in Shewanella oneidensis (strain ATCC 700550 / JCM 31522 / CIP 106686 / LMG 19005 / NCIMB 14063 / MR-1).